Here is a 284-residue protein sequence, read N- to C-terminus: Tegument protein VP22 (284 aa).

2 disordered regions span residues 1–126 (MSYY…WSID) and 239–284 (LYAS…SRRR). A compositionally biased stretch (basic and acidic residues) spans 74–83 (SRDDDDRRQP). The segment covering 94–108 (ERRKSQTTVTTRRKT) has biased composition (basic residues). Over residues 115 to 126 (KSSNSNGPWSID) the composition is skewed to polar residues.

Belongs to the alphaherpesvirinae VP22 tegument protein family. Interacts with gE (via C-terminus); this interaction is necessary for the recruitment of VP22 to the Golgi and its packaging into virions. Interacts with gM (via C-terminus). Interacts with VP16; this interaction allows the formation of a tripartite complex composed of VP16, VP22 and UL41/VHS. Interacts with the capsid-binding protein UL16. Interacts with host CGAS. In terms of processing, highly phosphorylated in the host cell. Packaging is selective for underphosphorylated forms.

It is found in the virion tegument. Its subcellular location is the host cytoplasm. The protein localises to the host nucleus. It localises to the host Golgi apparatus. In terms of biological role, tegument protein that plays different roles during the time course of infection. Participates in both the accumulation of viral mRNAs and viral protein translation at late time of infection. Modulates the RNase activity of the virion host shutoff protein UL41 probably to ensure necessary levels of key cellular mRNAs and proteins. Plays a role in microtubule reorganization that occurs after viral infection by stabilizing microtubule network. Plays a role in the inhibition of host innate immune system by targeting the CGAS enzymatic activity which is the principal cytosolic DNA sensor that detects invading viral DNA. Acts by mediating disruption of liquid-like droplets in which CGAS is activated, thereby preventing CGAS activity. The protein is Tegument protein VP22 (UL49) of Amazona oratrix (yellow-headed parrot).